A 287-amino-acid chain; its full sequence is 4-hydroxybenzoate octaprenyltransferase (287 aa).

8 consecutive transmembrane segments (helical) span residues I23 to A43, G46 to I66, L99 to I119, L141 to V161, G162 to A182, L213 to N233, G237 to I257, and F266 to A286.

Belongs to the UbiA prenyltransferase family. Requires Mg(2+) as cofactor.

It is found in the cell inner membrane. It catalyses the reaction all-trans-octaprenyl diphosphate + 4-hydroxybenzoate = 4-hydroxy-3-(all-trans-octaprenyl)benzoate + diphosphate. Its pathway is cofactor biosynthesis; ubiquinone biosynthesis. Functionally, catalyzes the prenylation of para-hydroxybenzoate (PHB) with an all-trans polyprenyl group. Mediates the second step in the final reaction sequence of ubiquinone-8 (UQ-8) biosynthesis, which is the condensation of the polyisoprenoid side chain with PHB, generating the first membrane-bound Q intermediate 3-octaprenyl-4-hydroxybenzoate. The polypeptide is 4-hydroxybenzoate octaprenyltransferase (Edwardsiella ictaluri (strain 93-146)).